Reading from the N-terminus, the 183-residue chain is Inner membrane-spanning protein YciB (183 aa).

A run of 5 helical transmembrane segments spans residues 4 to 24 (FIEF…DIYM), 50 to 70 (MQLF…FFHD), 72 to 92 (TFIK…LLIS), 119 to 139 (VNLG…YVAF), and 149 to 169 (FKVF…GVYL).

This sequence belongs to the YciB family.

The protein resides in the cell inner membrane. Functionally, plays a role in cell envelope biogenesis, maintenance of cell envelope integrity and membrane homeostasis. The protein is Inner membrane-spanning protein YciB of Aeromonas hydrophila subsp. hydrophila (strain ATCC 7966 / DSM 30187 / BCRC 13018 / CCUG 14551 / JCM 1027 / KCTC 2358 / NCIMB 9240 / NCTC 8049).